We begin with the raw amino-acid sequence, 203 residues long: MMIGIYIAALVIGYLFGSIPFGLILTKIAGTQDLRSIGSGNIGATNVLRTGRKGLAAATLLLDALKGTAAVIVAAYLASGTDAIAANAAMLAALGAFLGHLFPVWLKFKGGKGVAVYIGVLIGLFWPAAVVFCIMWLATAFTSRYSSLSALVASFVTPIFLWWFGHDSLASLFAVLTLLLFWMHRENIKRLQAGTESKIGQKK.

5 helical membrane-spanning segments follow: residues 5–25 (IYIAALVIGYLFGSIPFGLIL), 55–75 (LAAATLLLDALKGTAAVIVAA), 84–104 (IAANAAMLAALGAFLGHLFPV), 118–138 (IGVLIGLFWPAAVVFCIMWLA), and 159–179 (IFLWWFGHDSLASLFAVLTLL).

This sequence belongs to the PlsY family. As to quaternary structure, probably interacts with PlsX.

Its subcellular location is the cell inner membrane. It catalyses the reaction an acyl phosphate + sn-glycerol 3-phosphate = a 1-acyl-sn-glycero-3-phosphate + phosphate. It participates in lipid metabolism; phospholipid metabolism. Catalyzes the transfer of an acyl group from acyl-phosphate (acyl-PO(4)) to glycerol-3-phosphate (G3P) to form lysophosphatidic acid (LPA). This enzyme utilizes acyl-phosphate as fatty acyl donor, but not acyl-CoA or acyl-ACP. The protein is Glycerol-3-phosphate acyltransferase of Rhodopseudomonas palustris (strain ATCC BAA-98 / CGA009).